The primary structure comprises 572 residues: Urease subunit alpha (572 aa).

The Urease domain occupies 134–572 (AGIDSHIHLI…ASMNQRYFFG (439 aa)). Ni(2+)-binding residues include His-139, His-141, and Lys-222. Lys-222 carries the N6-carboxylysine modification. Residue His-224 coordinates substrate. Ni(2+)-binding residues include His-251 and His-277. The Proton donor role is filled by His-325. A Ni(2+)-binding site is contributed by Asp-365.

It belongs to the metallo-dependent hydrolases superfamily. Urease alpha subunit family. In terms of assembly, heterotrimer of UreA (gamma), UreB (beta) and UreC (alpha) subunits. Three heterotrimers associate to form the active enzyme. Ni cation is required as a cofactor. Post-translationally, carboxylation allows a single lysine to coordinate two nickel ions.

Its subcellular location is the cytoplasm. The enzyme catalyses urea + 2 H2O + H(+) = hydrogencarbonate + 2 NH4(+). Its pathway is nitrogen metabolism; urea degradation; CO(2) and NH(3) from urea (urease route): step 1/1. In Yersinia pseudotuberculosis serotype O:1b (strain IP 31758), this protein is Urease subunit alpha.